The sequence spans 38 residues: Large ribosomal subunit protein bL36 (38 aa).

It belongs to the bacterial ribosomal protein bL36 family.

This chain is Large ribosomal subunit protein bL36, found in Chloroherpeton thalassium (strain ATCC 35110 / GB-78).